We begin with the raw amino-acid sequence, 198 residues long: Endonuclease V (198 aa).

The Mg(2+) site is built by Asp38 and Asp101.

It belongs to the endonuclease V family. Mg(2+) is required as a cofactor.

The protein localises to the cytoplasm. The enzyme catalyses Endonucleolytic cleavage at apurinic or apyrimidinic sites to products with a 5'-phosphate.. In terms of biological role, DNA repair enzyme involved in the repair of deaminated bases. Selectively cleaves double-stranded DNA at the second phosphodiester bond 3' to a deoxyinosine leaving behind the intact lesion on the nicked DNA. This chain is Endonuclease V, found in Saccharolobus islandicus (strain M.14.25 / Kamchatka #1) (Sulfolobus islandicus).